Reading from the N-terminus, the 820-residue chain is Phosphoenolpyruvate synthase (820 aa).

Catalysis depends on H438, which acts as the Tele-phosphohistidine intermediate. Substrate contacts are provided by R539, R587, E689, G710, S711, N712, and D713. E689 provides a ligand contact to Mg(2+). D713 is a Mg(2+) binding site. C762 serves as the catalytic Proton donor.

It belongs to the PEP-utilizing enzyme family. Requires Mg(2+) as cofactor.

It catalyses the reaction pyruvate + ATP + H2O = phosphoenolpyruvate + AMP + phosphate + 2 H(+). The protein operates within carbohydrate biosynthesis; gluconeogenesis. In terms of biological role, catalyzes the phosphorylation of pyruvate to phosphoenolpyruvate. This Aeropyrum pernix (strain ATCC 700893 / DSM 11879 / JCM 9820 / NBRC 100138 / K1) protein is Phosphoenolpyruvate synthase (ppsA).